Consider the following 555-residue polypeptide: Urocanate hydratase (555 aa).

Residues 52 to 53 (GG), glutamine 130, 176 to 178 (GMG), glutamate 196, arginine 201, 242 to 243 (NA), 263 to 267 (QTSAH), 273 to 274 (YL), and tyrosine 322 contribute to the NAD(+) site. Cysteine 410 is a catalytic residue. NAD(+) is bound at residue glycine 492.

It belongs to the urocanase family. It depends on NAD(+) as a cofactor.

It localises to the cytoplasm. It carries out the reaction 4-imidazolone-5-propanoate = trans-urocanate + H2O. Its pathway is amino-acid degradation; L-histidine degradation into L-glutamate; N-formimidoyl-L-glutamate from L-histidine: step 2/3. In terms of biological role, catalyzes the conversion of urocanate to 4-imidazolone-5-propionate. The sequence is that of Urocanate hydratase from Shewanella baltica (strain OS185).